Reading from the N-terminus, the 445-residue chain is ATP synthase subunit b-delta (445 aa).

Residues 1 to 168 (MSIFIGQLIG…PSSAVLEAGA (168 aa)) are ATP synthase subunit b. The helical transmembrane segment at 3-23 (IFIGQLIGFAVIVFILVKWVV) threads the bilayer. The tract at residues 169–445 (SLNLRAASRE…LAAARTGLPD (277 aa)) is ATP synthase subunit delta.

It in the N-terminal section; belongs to the ATPase B chain family. This sequence in the C-terminal section; belongs to the ATPase delta chain family. In terms of assembly, F-type ATPases have 2 components, F(1) - the catalytic core - and F(0) - the membrane proton channel. F(1) has five subunits: alpha(3), beta(3), gamma(1), delta(1), epsilon(1). F(0) has three main subunits: a(1), b(2) and c(10-14). The alpha and beta chains form an alternating ring which encloses part of the gamma chain. F(1) is attached to F(0) by a central stalk formed by the gamma and epsilon chains, while a peripheral stalk is formed by the delta and b chains.

The protein resides in the cell membrane. In terms of biological role, f(1)F(0) ATP synthase produces ATP from ADP in the presence of a proton or sodium gradient. F-type ATPases consist of two structural domains, F(1) containing the extramembraneous catalytic core and F(0) containing the membrane proton channel, linked together by a central stalk and a peripheral stalk. During catalysis, ATP synthesis in the catalytic domain of F(1) is coupled via a rotary mechanism of the central stalk subunits to proton translocation. Functionally, this fusion protein includes a component of the F(0) channel (subunit b) and of the F(1) subunit (subunit delta). Two copies of subunit b and one of delta together form the peripheral 'stator' stalk which links F(1) to F(0). This Mycolicibacterium vanbaalenii (strain DSM 7251 / JCM 13017 / BCRC 16820 / KCTC 9966 / NRRL B-24157 / PYR-1) (Mycobacterium vanbaalenii) protein is ATP synthase subunit b-delta (atpFH).